The primary structure comprises 349 residues: 1-acylglycerol-3-phosphate O-acyltransferase ABHD5 (349 aa).

N-acetylalanine is present on Ala2. One can recognise an AB hydrolase-1 domain in the interval 77–185 (PLVLLHGFGG…VEPWGFPERP (109 aa)). The HXXXXD motif signature appears at 327-332 (HYVYAD).

This sequence belongs to the peptidase S33 family. ABHD4/ABHD5 subfamily. In terms of assembly, interacts with ADRP, PLIN and PNPLA2. Interacts with PLIN5; promotes interaction with PNPLA2.

The protein resides in the cytoplasm. Its subcellular location is the lipid droplet. The enzyme catalyses a 1-acyl-sn-glycero-3-phosphate + an acyl-CoA = a 1,2-diacyl-sn-glycero-3-phosphate + CoA. The catalysed reaction is 1-(9Z-octadecenoyl)-sn-glycero-3-phosphate + (9Z)-octadecenoyl-CoA = 1,2-di-(9Z-octadecenoyl)-sn-glycero-3-phosphate + CoA. It carries out the reaction 1-(9Z-octadecenoyl)-sn-glycero-3-phosphate + hexadecanoyl-CoA = 1-(9Z)-octadecenoyl-2-hexadecanoyl-sn-glycero-3-phosphate + CoA. It catalyses the reaction 1-(9Z-octadecenoyl)-sn-glycero-3-phosphate + octadecanoyl-CoA = 1-(9Z-octadecenoyl)-2-octadecanoyl-sn-glycero-3-phosphate + CoA. The enzyme catalyses 1-(9Z-octadecenoyl)-sn-glycero-3-phosphate + (5Z,8Z,11Z,14Z)-eicosatetraenoyl-CoA = 1-(9Z)-octadecenoyl-2-(5Z,8Z,11Z,14Z)-eicosatetraenoyl-sn-glycero-3-phosphate + CoA. The catalysed reaction is eicosanoyl-CoA + 1-(9Z-octadecenoyl)-sn-glycero-3-phosphate = 1-(9Z)-octadecenoyl-2-eicosanoyl-sn-glycero-3-phosphate + CoA. It carries out the reaction 1-hexadecanoyl-sn-glycero-3-phosphate + (9Z)-octadecenoyl-CoA = 1-hexadecanoyl-2-(9Z-octadecenoyl)-sn-glycero-3-phosphate + CoA. It catalyses the reaction 1-octadecanoyl-sn-glycero-3-phosphate + (9Z)-octadecenoyl-CoA = 1-octadecanoyl-2-(9Z-octadecenoyl)-sn-glycero-3-phosphate + CoA. The enzyme catalyses 1-(5Z,8Z,11Z,14Z-eicosatetraenoyl)-sn-glycero-3-phosphate + (9Z)-octadecenoyl-CoA = 1-(5Z,8Z,11Z,14Z)-eicosatetraenoyl-2-(9Z)-octadecenoyl-sn-glycero-3-phosphate + CoA. Acyltransferase activity is inhibited by detergents such as Triton X-100 and 3-[(3-cholamidopropyl)dimethylammonio]-1-propanesulfonate (CHAPS). Acyltransferase activity is inhibited by the presence of magnesium and calcium. Coenzyme A-dependent lysophosphatidic acid acyltransferase that catalyzes the transfer of an acyl group on a lysophosphatidic acid. Functions preferentially with 1-oleoyl-lysophosphatidic acid followed by 1-palmitoyl-lysophosphatidic acid, 1-stearoyl-lysophosphatidic acid and 1-arachidonoyl-lysophosphatidic acid as lipid acceptor. Functions preferentially with arachidonoyl-CoA followed by oleoyl-CoA as acyl group donors. Functions in phosphatidic acid biosynthesis. May regulate the cellular storage of triacylglycerol through activation of the phospholipase PNPLA2. Involved in keratinocyte differentiation. Regulates lipid droplet fusion. The protein is 1-acylglycerol-3-phosphate O-acyltransferase ABHD5 of Sus scrofa (Pig).